The sequence spans 523 residues: Apoptosis inhibitor 5-B (523 aa).

Residues 1–360 (MPTVEELYRN…HQLGRKLPDF (360 aa)) are ARM-like and Heat-like helical repeats. The tract at residues 446–523 (VQKTDSGQKR…RGNRSRGRIY (78 aa)) is disordered. Positions 454–475 (KRMSDETSSTSPPKKPVVGPKR) match the Nuclear localization signal motif. The segment covering 502–515 (GFQGGRGRGWGGRG) has biased composition (gly residues).

It belongs to the API5 family. In terms of assembly, monomer.

It localises to the nucleus. In terms of biological role, may be an antiapoptotic factor. The polypeptide is Apoptosis inhibitor 5-B (api5-b) (Xenopus laevis (African clawed frog)).